A 508-amino-acid chain; its full sequence is Glycerol kinase (508 aa).

Thr-15 contributes to the ADP binding site. Residues Thr-15, Ser-16, and Ser-17 each contribute to the ATP site. Thr-15 contacts sn-glycerol 3-phosphate. Arg-19 contributes to the ADP binding site. Residues Arg-85, Glu-86, Tyr-138, and Asp-251 each coordinate sn-glycerol 3-phosphate. Residues Arg-85, Glu-86, Tyr-138, Asp-251, and Gln-252 each coordinate glycerol. Positions 273, 317, and 419 each coordinate ADP. Residues Thr-273, Gly-317, and Gly-419 each contribute to the ATP site.

The protein belongs to the FGGY kinase family.

It carries out the reaction glycerol + ATP = sn-glycerol 3-phosphate + ADP + H(+). The protein operates within polyol metabolism; glycerol degradation via glycerol kinase pathway; sn-glycerol 3-phosphate from glycerol: step 1/1. Its activity is regulated as follows. Inhibited by fructose 1,6-bisphosphate (FBP). Functionally, key enzyme in the regulation of glycerol uptake and metabolism. Catalyzes the phosphorylation of glycerol to yield sn-glycerol 3-phosphate. The sequence is that of Glycerol kinase from Mycoplasma pneumoniae (strain ATCC 29342 / M129 / Subtype 1) (Mycoplasmoides pneumoniae).